A 311-amino-acid chain; its full sequence is Ribonuclease Z (311 aa).

Zn(2+)-binding residues include His61, His63, Asp65, His66, His148, Asp216, and His275. Residue Asp65 is the Proton acceptor of the active site.

This sequence belongs to the RNase Z family. As to quaternary structure, homodimer. The cofactor is Zn(2+).

It catalyses the reaction Endonucleolytic cleavage of RNA, removing extra 3' nucleotides from tRNA precursor, generating 3' termini of tRNAs. A 3'-hydroxy group is left at the tRNA terminus and a 5'-phosphoryl group is left at the trailer molecule.. Zinc phosphodiesterase, which displays some tRNA 3'-processing endonuclease activity. Probably involved in tRNA maturation, by removing a 3'-trailer from precursor tRNA. The chain is Ribonuclease Z from Clostridium novyi (strain NT).